The chain runs to 192 residues: Orotate phosphoribosyltransferase 2 (192 aa).

A 5-phospho-alpha-D-ribose 1-diphosphate-binding site is contributed by 116 to 124 (EDIVTTGLS). Orotate is bound by residues threonine 120 and arginine 148.

This sequence belongs to the purine/pyrimidine phosphoribosyltransferase family. PyrE subfamily. Homodimer. Mg(2+) serves as cofactor.

The catalysed reaction is orotidine 5'-phosphate + diphosphate = orotate + 5-phospho-alpha-D-ribose 1-diphosphate. Its pathway is pyrimidine metabolism; UMP biosynthesis via de novo pathway; UMP from orotate: step 1/2. Catalyzes the transfer of a ribosyl phosphate group from 5-phosphoribose 1-diphosphate to orotate, leading to the formation of orotidine monophosphate (OMP). In Mesorhizobium japonicum (strain LMG 29417 / CECT 9101 / MAFF 303099) (Mesorhizobium loti (strain MAFF 303099)), this protein is Orotate phosphoribosyltransferase 2.